A 248-amino-acid polypeptide reads, in one-letter code: 5'-nucleotidase SurE (248 aa).

A divalent metal cation-binding residues include Asp-8, Asp-9, Ser-39, and Asn-91.

Belongs to the SurE nucleotidase family. A divalent metal cation serves as cofactor.

Its subcellular location is the cytoplasm. It catalyses the reaction a ribonucleoside 5'-phosphate + H2O = a ribonucleoside + phosphate. Nucleotidase that shows phosphatase activity on nucleoside 5'-monophosphates. The protein is 5'-nucleotidase SurE of Marinomonas sp. (strain MWYL1).